Consider the following 90-residue polypeptide: MKANIHPQFKTVEVSCATCGKQHPIGTTVNSIKIETCSNCHTFYTGVQTFVVKAGPVDKFNKRYGITQDQKVKKFPSNADNQKEPAEEQE.

The disordered stretch occupies residues 71–90 (KVKKFPSNADNQKEPAEEQE). Positions 81–90 (NQKEPAEEQE) are enriched in basic and acidic residues.

This sequence belongs to the bacterial ribosomal protein bL31 family. Type A subfamily. Part of the 50S ribosomal subunit.

Binds the 23S rRNA. The chain is Large ribosomal subunit protein bL31 (rpmE) from Aster yellows witches'-broom phytoplasma (strain AYWB).